Consider the following 511-residue polypeptide: MSEYLLEMRNIGKEFNGVKALDGIYLKVRAGECVELCGENGAGKSTLMKVPSGVYPHGTWTGEIFWEGKELKASGIRDTEAAGIVIIHQELMMVPHLSVAENIFLGCEPTTGGFIDYDQMNARAAELLARLKINDINVALPVYHYSGGKQQLIEIAKAINKNAKLLILDEPTSALTASETRVLIDLIKDFKKQGMACVYISHKLDEVAEISDTVTVIRDGAHIATRPMSELTTPDIITMMVGREMKNLFPREPHDIGEVMFEARNISCWDVTNPGRKVVDDVSFALRRGEILGIAGLVGAGRTELVSSLFGVWPGACQGQVFLEGKEIKIRTPRDAVRQGICMVPEDHKRDGILPIMPVGHNMTISVLDRFSLRGLIDKDAELVAIQREILRLKVKTADPMLAIASLSGGNQQKAVLSKMMLPDPKVLILDEPTRGVDVGAKYEIYKLIFALARQGVSILMVSSEMPEVLGISDRVLVIGEGKLRGDFPNENLTQEKVLAAAIGKPATNAA.

ABC transporter domains follow at residues L6 to E244 and F261 to P506. G38 to S45 serves as a coordination point for ATP.

Belongs to the ABC transporter superfamily. Xylose importer (TC 3.A.1.2.4) family. The complex is composed of two ATP-binding proteins (XylG), two transmembrane proteins (XylH) and a solute-binding protein (XylF).

It is found in the cell inner membrane. The enzyme catalyses D-xylose(out) + ATP + H2O = D-xylose(in) + ADP + phosphate + H(+). Its function is as follows. Part of the ABC transporter complex XylFGH involved in xylose import. Responsible for energy coupling to the transport system. The sequence is that of Xylose import ATP-binding protein XylG from Brucella suis biovar 1 (strain 1330).